A 654-amino-acid polypeptide reads, in one-letter code: tRNA 5-methylaminomethyl-2-thiouridine biosynthesis bifunctional protein MnmC (654 aa).

The segment at 1 to 236 (MPTLLQHAQI…KWEVMSGAYV (236 aa)) is tRNA (mnm(5)s(2)U34)-methyltransferase. The segment at 262 to 654 (IGAGLAGSSS…FGLRRLIRGK (393 aa)) is FAD-dependent cmnm(5)s(2)U34 oxidoreductase.

The protein in the N-terminal section; belongs to the methyltransferase superfamily. tRNA (mnm(5)s(2)U34)-methyltransferase family. It in the C-terminal section; belongs to the DAO family. Requires FAD as cofactor.

It localises to the cytoplasm. The catalysed reaction is 5-aminomethyl-2-thiouridine(34) in tRNA + S-adenosyl-L-methionine = 5-methylaminomethyl-2-thiouridine(34) in tRNA + S-adenosyl-L-homocysteine + H(+). Functionally, catalyzes the last two steps in the biosynthesis of 5-methylaminomethyl-2-thiouridine (mnm(5)s(2)U) at the wobble position (U34) in tRNA. Catalyzes the FAD-dependent demodification of cmnm(5)s(2)U34 to nm(5)s(2)U34, followed by the transfer of a methyl group from S-adenosyl-L-methionine to nm(5)s(2)U34, to form mnm(5)s(2)U34. In Pseudomonas putida (strain ATCC 700007 / DSM 6899 / JCM 31910 / BCRC 17059 / LMG 24140 / F1), this protein is tRNA 5-methylaminomethyl-2-thiouridine biosynthesis bifunctional protein MnmC.